Reading from the N-terminus, the 909-residue chain is Protein translocase subunit SecA (909 aa).

ATP contacts are provided by residues Gln87, 105–109 (GEGKT), and Asp512. The disordered stretch occupies residues 863–909 (LVGGGDEDDESIAAHTPMIRDGDKVGRNDPCPCGSGRKYKQCHGKLS). The span at 880 to 889 (MIRDGDKVGR) shows a compositional bias: basic and acidic residues. Residues Cys893, Cys895, Cys904, and His905 each contribute to the Zn(2+) site. Residues 899–909 (RKYKQCHGKLS) show a composition bias toward basic residues.

It belongs to the SecA family. Monomer and homodimer. Part of the essential Sec protein translocation apparatus which comprises SecA, SecYEG and auxiliary proteins SecDF-YajC and YidC. The cofactor is Zn(2+).

It localises to the cell inner membrane. The protein localises to the cytoplasm. The enzyme catalyses ATP + H2O + cellular proteinSide 1 = ADP + phosphate + cellular proteinSide 2.. Functionally, part of the Sec protein translocase complex. Interacts with the SecYEG preprotein conducting channel. Has a central role in coupling the hydrolysis of ATP to the transfer of proteins into and across the cell membrane, serving both as a receptor for the preprotein-SecB complex and as an ATP-driven molecular motor driving the stepwise translocation of polypeptide chains across the membrane. The sequence is that of Protein translocase subunit SecA from Shewanella putrefaciens (strain CN-32 / ATCC BAA-453).